The chain runs to 167 residues: uncharacterized protein (167 aa).

The protein to A.aeolicus aq_328.

This is an uncharacterized protein from Aquifex aeolicus (strain VF5).